The chain runs to 3078 residues: Homeobox-like protein HDP1 (3078 aa).

Disordered regions lie at residues 1–29 (MKRG…DNSN), 59–164 (LHNS…INDN), 203–306 (SKRK…NIGK), 949–980 (NAEI…QDEN), 1323–1390 (DEDS…KDRK), 1415–1445 (SSSN…NNKN), 1939–2046 (KVND…QDKF), 2115–2216 (TNES…QYNY), 2599–2637 (AYMN…DDNI), and 2959–3019 (QQNN…NNGP). Polar residues predominate over residues 14–29 (CPSNGMASSQRNDNSN). Residues 59-84 (LHNSSSRESKDMKLSEEPRHINEKCI) show a composition bias toward basic and acidic residues. 2 stretches are compositionally biased toward low complexity: residues 85–94 (NDNNKINNNN) and 114–127 (NNNN…TKNN). 5 stretches are compositionally biased toward polar residues: residues 128 to 137 (IFFQTNNPDT), 148 to 157 (KQENTSSSLH), 209 to 229 (NSNN…NNIT), 237 to 252 (TSSI…NTVH), and 949 to 960 (NAEIHESNSPNH). The segment covering 1368 to 1380 (RKNKINRGSKGKH) has biased composition (basic residues). The span at 1415 to 1433 (SSSNYEEGNSSSNEENNIS) shows a compositional bias: low complexity. Polar residues predominate over residues 1434 to 1445 (TDKNISNTNNKN). A compositionally biased stretch (low complexity) spans 1939–1993 (KVNDSNNSNDANEGNNANYSNDSSNTNNNTSSSTNNSNNNTSCSSQNTTTSSENN). Basic and acidic residues-rich tracts occupy residues 2012–2021 (KDTQKEKNNL) and 2029–2046 (YEDR…QDKF). A compositionally biased stretch (polar residues) spans 2115 to 2126 (TNESIKTNSDQN). The segment covering 2139–2160 (MNNDNYNSSYDNVHNDNDNNMV) has biased composition (low complexity). Residues 2163–2177 (DSSRQDNMEKQKSGE) are compositionally biased toward basic and acidic residues. Residues 2192–2201 (NDNDNDDNND) are compositionally biased toward acidic residues. Low complexity-rich tracts occupy residues 2202–2216 (NDNN…QYNY), 2602–2630 (NDNN…YSYD), and 2959–2989 (QQNN…QKNN). Over residues 2990 to 3006 (LSEVQVSNINTPSSYNI) the composition is skewed to polar residues. The tract at residues 2991–3078 (SEVQVSNINT…GKRRKNEDNK (88 aa)) is DNA-binding.

As to quaternary structure, homodimer.

It localises to the nucleus. The protein localises to the chromosome. Its function is as follows. Transcriptional regulator which binds to the DNA motifs 5'-GTGCACAC-3' (motif A) and 5'-[GTA]TGTA[CT][GA]TAC-3' (motif B) of genes essential for early gametocyte development, including those critical for the expansion of the inner membrane complex (IMC). The protein is Homeobox-like protein HDP1 of Plasmodium falciparum (isolate NF54).